A 550-amino-acid chain; its full sequence is Hydroxylamine reductase (550 aa).

The [4Fe-4S] cluster site is built by Cys-7, Cys-10, Cys-19, and Cys-25. Hybrid [4Fe-2O-2S] cluster contacts are provided by His-244, Glu-268, Cys-312, Cys-405, Cys-433, Cys-458, Glu-493, and Lys-495. Cys-405 is modified (cysteine persulfide).

This sequence belongs to the HCP family. [4Fe-4S] cluster is required as a cofactor. The cofactor is hybrid [4Fe-2O-2S] cluster.

It is found in the cytoplasm. The catalysed reaction is A + NH4(+) + H2O = hydroxylamine + AH2 + H(+). Functionally, catalyzes the reduction of hydroxylamine to form NH(3) and H(2)O. This Porphyromonas gingivalis (strain ATCC 33277 / DSM 20709 / CIP 103683 / JCM 12257 / NCTC 11834 / 2561) protein is Hydroxylamine reductase.